The sequence spans 1892 residues: Protein TIC 214 (1892 aa).

Helical transmembrane passes span 18 to 38 (IINS…FSIG), 64 to 84 (FITG…HLAL), 87 to 107 (PHTI…WNNH), 124 to 144 (LSIQ…HFIL), 172 to 192 (VGWL…LVWI), and 221 to 241 (IFSI…PSPI). 3 disordered regions span residues 250 to 300 (SKTE…EGWD), 794 to 814 (REEQ…ENKR), and 1581 to 1609 (RIQE…LGPV). The span at 256-268 (VESEEEKDVEIET) shows a compositional bias: acidic residues. The span at 1581–1602 (RIQEEKEPASQGEKERGSDIEN) shows a compositional bias: basic and acidic residues.

This sequence belongs to the TIC214 family. In terms of assembly, part of the Tic complex.

Its subcellular location is the plastid. The protein localises to the chloroplast inner membrane. Its function is as follows. Involved in protein precursor import into chloroplasts. May be part of an intermediate translocation complex acting as a protein-conducting channel at the inner envelope. In Nicotiana tomentosiformis (Tobacco), this protein is Protein TIC 214.